A 290-amino-acid polypeptide reads, in one-letter code: Inactive tau-tubulin kinase ttbk-6 (290 aa).

The Protein kinase domain maps to M1–I240. Disordered regions lie at residues S244–E263 and R268–L290.

It belongs to the protein kinase superfamily. CK1 Ser/Thr protein kinase family.

The chain is Inactive tau-tubulin kinase ttbk-6 from Caenorhabditis elegans.